Consider the following 612-residue polypeptide: Glutamine--fructose-6-phosphate aminotransferase [isomerizing] (612 aa).

Cysteine 2 acts as the Nucleophile; for GATase activity in catalysis. One can recognise a Glutamine amidotransferase type-2 domain in the interval 2–220 (CGIVGAIRAH…DGDIALLASD (219 aa)). 2 consecutive SIS domains span residues 288–428 (AKSV…VRGL) and 461–602 (WAQQ…VDKP). Catalysis depends on lysine 607, which acts as the For Fru-6P isomerization activity.

As to quaternary structure, homodimer.

It localises to the cytoplasm. The catalysed reaction is D-fructose 6-phosphate + L-glutamine = D-glucosamine 6-phosphate + L-glutamate. Catalyzes the first step in hexosamine metabolism, converting fructose-6P into glucosamine-6P using glutamine as a nitrogen source. In Neisseria meningitidis serogroup A / serotype 4A (strain DSM 15465 / Z2491), this protein is Glutamine--fructose-6-phosphate aminotransferase [isomerizing].